Consider the following 101-residue polypeptide: NADH-quinone oxidoreductase subunit K (101 aa).

3 helical membrane-spanning segments follow: residues 4-24 (VGHY…GIFI), 29-49 (IIVI…NLVA), and 65-85 (FVLT…VIYF).

It belongs to the complex I subunit 4L family. In terms of assembly, NDH-1 is composed of 14 different subunits. Subunits NuoA, H, J, K, L, M, N constitute the membrane sector of the complex.

It is found in the cell inner membrane. It catalyses the reaction a quinone + NADH + 5 H(+)(in) = a quinol + NAD(+) + 4 H(+)(out). NDH-1 shuttles electrons from NADH, via FMN and iron-sulfur (Fe-S) centers, to quinones in the respiratory chain. The immediate electron acceptor for the enzyme in this species is believed to be ubiquinone. Couples the redox reaction to proton translocation (for every two electrons transferred, four hydrogen ions are translocated across the cytoplasmic membrane), and thus conserves the redox energy in a proton gradient. This Sphingopyxis alaskensis (strain DSM 13593 / LMG 18877 / RB2256) (Sphingomonas alaskensis) protein is NADH-quinone oxidoreductase subunit K.